Consider the following 97-residue polypeptide: Large ribosomal subunit protein bL28 (97 aa).

Belongs to the bacterial ribosomal protein bL28 family.

This Rickettsia akari (strain Hartford) protein is Large ribosomal subunit protein bL28.